Consider the following 270-residue polypeptide: BPI fold-containing family A member 1 (270 aa).

The N-terminal stretch at 1–19 (MFLVGSLVVLCGLLAQSTA) is a signal peptide. The important for surfactant activity and antibacterial properties stretch occupies residues 104–109 (LVGGLL). Residue Asn-174 is glycosylated (N-linked (GlcNAc...) asparagine). Residues Cys-196 and Cys-238 are joined by a disulfide bond.

This sequence belongs to the BPI/LBP/Plunc superfamily. Plunc family. Monomer. Interacts (via N-terminus) with SCNN1B, a subunit of the heterotrimeric epithelial sodium channel (ENaC); this inhibits proteolytic activation of ENaC. As to expression, detected in adult nasal epithelium, heart, lung, spleen, testis and salivary gland, and in embryonic nasal epithelium, lung, salivary gland and thymus.

It localises to the secreted. Its function is as follows. Lipid-binding protein which shows high specificity for the surfactant phospholipid dipalmitoylphosphatidylcholine (DPPC). Plays a role in the innate immune responses of the upper airways. Reduces the surface tension in secretions from airway epithelia and inhibits the formation of biofilm by pathogenic Gram-negative bacteria, such as P.aeruginosa and K.pneumoniae. Negatively regulates proteolytic cleavage of SCNN1G, an event that is required for activation of the epithelial sodium channel (ENaC), and thereby contributes to airway surface liquid homeostasis and proper clearance of mucus. Plays a role in the airway inflammatory response after exposure to irritants. May attract macrophages and neutrophils. The protein is BPI fold-containing family A member 1 (Bpifa1) of Rattus norvegicus (Rat).